The sequence spans 448 residues: Asparagine--tRNA ligase (448 aa).

This sequence belongs to the class-II aminoacyl-tRNA synthetase family. As to quaternary structure, homodimer.

It is found in the cytoplasm. It catalyses the reaction tRNA(Asn) + L-asparagine + ATP = L-asparaginyl-tRNA(Asn) + AMP + diphosphate + H(+). In Streptococcus thermophilus (strain CNRZ 1066), this protein is Asparagine--tRNA ligase.